We begin with the raw amino-acid sequence, 51 residues long: Sperm protamine P1 (51 aa).

Disulfide bonds link Cys-7–Cys-15 and Cys-38–Cys-48.

Belongs to the protamine P1 family. In terms of assembly, cross-linked by interchain disulfide bonds around the DNA-helix. In terms of processing, phosphorylated by SRPK1. In terms of tissue distribution, testis.

Its subcellular location is the nucleus. The protein resides in the chromosome. In terms of biological role, protamines substitute for histones in the chromatin of sperm during the haploid phase of spermatogenesis. They compact sperm DNA into a highly condensed, stable and inactive complex. The polypeptide is Sperm protamine P1 (Prm1) (Rattus norvegicus (Rat)).